A 198-amino-acid chain; its full sequence is Probable nicotinate-nucleotide adenylyltransferase (198 aa).

It belongs to the NadD family.

It carries out the reaction nicotinate beta-D-ribonucleotide + ATP + H(+) = deamido-NAD(+) + diphosphate. It participates in cofactor biosynthesis; NAD(+) biosynthesis; deamido-NAD(+) from nicotinate D-ribonucleotide: step 1/1. Functionally, catalyzes the reversible adenylation of nicotinate mononucleotide (NaMN) to nicotinic acid adenine dinucleotide (NaAD). The sequence is that of Probable nicotinate-nucleotide adenylyltransferase from Herpetosiphon aurantiacus (strain ATCC 23779 / DSM 785 / 114-95).